A 622-amino-acid chain; its full sequence is Membrane protein insertase YidC (622 aa).

The helical transmembrane segment at 6-26 threads the bilayer; that stretch reads FIAVVLSVLVLVGASFLQELL. The tract at residues 37–71 is disordered; that stretch reads AEHTLSAVPEETRTQSAHGGAADTQETTQPAAHPS. Helical transmembrane passes span 413-433, 483-503, 513-533, and 579-599; these read LIPNWGVAIILVTIAIKVLFF, LSGCLPTLVQMPIIFAMYRLF, MFIPYWIPDLSLADSVWTLPF, and VMPLFFFFFFYDAPSGLLVYW.

This sequence belongs to the OXA1/ALB3/YidC family. Type 1 subfamily. In terms of assembly, interacts with the Sec translocase complex via SecD. Specifically interacts with transmembrane segments of nascent integral membrane proteins during membrane integration.

The protein resides in the cell inner membrane. Its function is as follows. Required for the insertion and/or proper folding and/or complex formation of integral membrane proteins into the membrane. Involved in integration of membrane proteins that insert both dependently and independently of the Sec translocase complex, as well as at least some lipoproteins. Aids folding of multispanning membrane proteins. The protein is Membrane protein insertase YidC of Treponema pallidum (strain Nichols).